Here is a 479-residue protein sequence, read N- to C-terminus: Oxysterol-binding protein homolog C23B6.01c (479 aa).

Phosphoserine is present on residues Ser-328, Ser-408, Ser-409, and Ser-421. Residues Lys-404–Ser-418 show a composition bias toward basic and acidic residues. The disordered stretch occupies residues Lys-404 to Leu-479. Residues Gln-439–Gly-452 show a composition bias toward polar residues. Over residues Lys-470 to Leu-479 the composition is skewed to basic and acidic residues.

The protein belongs to the OSBP family.

The protein localises to the cytoplasm. It localises to the nucleus. In Schizosaccharomyces pombe (strain 972 / ATCC 24843) (Fission yeast), this protein is Oxysterol-binding protein homolog C23B6.01c.